The chain runs to 735 residues: Transcription factor RFX4 (735 aa).

Residues 25–59 (SESKRFSSHSSIGNISNDENEEKENNRASKPHSTP) form a disordered region. The DNA-binding element occupies 44–126 (NEEKENNRAS…RRLGTRGQSK (83 aa)). The segment at residues 61–136 (TLQWLEENYE…YHYYGIAVKE (76 aa)) is a DNA-binding region (RFX-type winged-helix). Residues 315-487 (RFSQILKRQT…NELMRAMKGE (173 aa)) form a necessary for dimerization region.

It belongs to the RFX family.

The protein resides in the nucleus. Functionally, may activate transcription by interacting directly with the X-box. In Danio rerio (Zebrafish), this protein is Transcription factor RFX4 (rfx4).